A 1417-amino-acid polypeptide reads, in one-letter code: Cytoadherence-linked asexual protein 3.1 (1417 aa).

Positions Met-1–Cys-24 are cleaved as a signal peptide. Disulfide bonds link Cys-333–Cys-361, Cys-407–Cys-413, Cys-517–Cys-545, and Cys-521–Cys-542. Residues Leu-1204 to Phe-1224 traverse the membrane as a helical segment. Residues Thr-1383 to His-1417 are disordered. Residues Asp-1394–Leu-1411 show a composition bias toward acidic residues.

In terms of assembly, self-associates. Component of the RhopH complex. RhopH complex is at least composed of CLAG3.1/CLAG3.2, RhopH2 and RhopH3 with a 1:1:1 subunit stoichiometry. CLAG3.1/CLAG3.2 mediates subunit association through independent contacts with RhopH2 and RhopH3, which do not directly interact with one another. Interacts with RhopH2. Interacts with RhopH3.

The protein localises to the host cell membrane. Its subcellular location is the host cytoplasm. It is found in the cytoplasmic vesicle. It localises to the secretory vesicle. The protein resides in the rhoptry. Participates in the formation of new permeability pathways in Plasmodium-infected erythrocytes enabling the uptake of nutrients from the blood plasma. This is Cytoadherence-linked asexual protein 3.1 from Plasmodium falciparum.